We begin with the raw amino-acid sequence, 550 residues long: Arginine--tRNA ligase (550 aa).

The 'HIGH' region motif lies at 130-140 (ANPTGPIHLGG).

It belongs to the class-I aminoacyl-tRNA synthetase family. Monomer.

Its subcellular location is the cytoplasm. It catalyses the reaction tRNA(Arg) + L-arginine + ATP = L-arginyl-tRNA(Arg) + AMP + diphosphate. This chain is Arginine--tRNA ligase, found in Rhodococcus opacus (strain B4).